Consider the following 144-residue polypeptide: Transcription antitermination protein NusB (144 aa).

It belongs to the NusB family.

In terms of biological role, involved in transcription antitermination. Required for transcription of ribosomal RNA (rRNA) genes. Binds specifically to the boxA antiterminator sequence of the ribosomal RNA (rrn) operons. The chain is Transcription antitermination protein NusB from Pelotomaculum thermopropionicum (strain DSM 13744 / JCM 10971 / SI).